The sequence spans 195 residues: Imidazoleglycerol-phosphate dehydratase (195 aa).

It belongs to the imidazoleglycerol-phosphate dehydratase family.

It is found in the cytoplasm. The enzyme catalyses D-erythro-1-(imidazol-4-yl)glycerol 3-phosphate = 3-(imidazol-4-yl)-2-oxopropyl phosphate + H2O. It participates in amino-acid biosynthesis; L-histidine biosynthesis; L-histidine from 5-phospho-alpha-D-ribose 1-diphosphate: step 6/9. This is Imidazoleglycerol-phosphate dehydratase from Hydrogenovibrio crunogenus (strain DSM 25203 / XCL-2) (Thiomicrospira crunogena).